A 415-amino-acid polypeptide reads, in one-letter code: Multidrug resistance protein MdtA (415 aa).

Positions 1–21 (MKGSYKSRWVIVIVVVIAAIA) are cleaved as a signal peptide. Disordered stretches follow at residues 32 to 60 (SRSA…GPLA) and 392 to 415 (EAQS…GARS). The span at 399 to 415 (PEEKATSREYAKKGARS) shows a compositional bias: basic and acidic residues.

It belongs to the membrane fusion protein (MFP) (TC 8.A.1) family. In terms of assembly, part of a tripartite efflux system composed of MdtA, MdtB and MdtC.

The protein localises to the cell inner membrane. The MdtABC tripartite complex confers resistance against novobiocin and deoxycholate. This chain is Multidrug resistance protein MdtA, found in Escherichia coli (strain 55989 / EAEC).